Reading from the N-terminus, the 67-residue chain is Conotoxin Pu5.1 (67 aa).

A signal peptide spans 1-22; it reads MRCVPVFVILLLLIASTPSVDA. Residues 23 to 51 constitute a propeptide that is removed on maturation; that stretch reads RPNPKDDVPLASFHEDANGILQMLWKKGR. At tryptophan 63 the chain carries Tryptophan amide.

It belongs to the conotoxin T superfamily. Contains 2 disulfide bonds that can be either 'C1-C3, C2-C4' or 'C1-C4, C2-C3', since these disulfide connectivities have been observed for conotoxins with cysteine framework V (for examples, see AC P0DQQ7 and AC P81755). In terms of tissue distribution, expressed by the venom duct.

The protein resides in the secreted. This is Conotoxin Pu5.1 from Conus pulicarius (Flea-bitten cone).